The sequence spans 145 residues: I-leader protein (145 aa).

It is found in the host cytoplasm. It localises to the host perinuclear region. The protein is I-leader protein of Human adenovirus C serotype 2 (HAdV-2).